A 336-amino-acid chain; its full sequence is Large ribosomal subunit protein mL39 (336 aa).

The region spanning 60–126 (EKIEVKHVGK…TKSCEIKFLT (67 aa)) is the TGS domain. An N6-acetyllysine modification is found at Lys123.

It belongs to the mitochondrion-specific ribosomal protein mL39 family. Component of the mitochondrial ribosome large subunit (39S) which comprises a 16S rRNA and about 50 distinct proteins.

It is found in the mitochondrion. This chain is Large ribosomal subunit protein mL39 (Mrpl39), found in Mus musculus (Mouse).